We begin with the raw amino-acid sequence, 586 residues long: MANAYERFNLHSTPEKFYIEACDDGADDVLVIDRVSTEMTLAGIKDIPPSGITRPICGVMGTVRLVAGMYLIVITRKRKVGDLFGHTVWKAVEFDVISYKKTILHLTDIQMQDNKTFLTMINNVLNTDGFYFCTDYDLTHTQQRLSNTSPDFQEMSLLERADQRFMWNGNLLREIIAQPELHKFAFPVIHGFIVMKPCCINGKVFEWIIISRRSCFRAGVRYYVRGIDSEGHAANFVETEQIVQFNNARASFVQTRGSIPFFWSQRPNLKYKPKPLISKDTNHMDGLRRHFESQVLIYGKQVILNLVNQKGSELPLEQAFAKMVSSMENGFIKYIAFDFHKECSKMRWHRLQILVDAVSDMQEEFGYFMVSSDGKVLSEQSGTFRSNCMDCLDRTNVIQSLLARRSLQSQLQRMGVLHVGQKIEEQADFEKIYKNAWADNANACAKQYAGTGALKTDFTRTGKRTHWGLVMDGWNSMIRYYKNNFSDGFRQDSIDLFLGNYSVDETDSLTPLHVKKDWKFLLLPVIMVVAFSMCIICLLMAGDTWTETLAYVLFWGMASALTAAVIVVNGREFVDAPKLVQKEKMD.

At 1–519 the chain is on the cytoplasmic side; sequence MANAYERFNL…TPLHVKKDWK (519 aa). An SAC domain is found at 121 to 450; it reads INNVLNTDGF…ANACAKQYAG (330 aa). The essential for phosphatidylinositol-4-phosphate phosphatase activity stretch occupies residues 451–586; it reads TGALKTDFTR…PKLVQKEKMD (136 aa). Residues 520–540 form a helical membrane-spanning segment; sequence FLLLPVIMVVAFSMCIICLLM. The Lumenal portion of the chain corresponds to 541–547; it reads AGDTWTE. Residues 548 to 568 traverse the membrane as a helical segment; the sequence is TLAYVLFWGMASALTAAVIVV. Residues 569–586 are Cytoplasmic-facing; that stretch reads NGREFVDAPKLVQKEKMD.

It localises to the endoplasmic reticulum membrane. The protein resides in the golgi apparatus membrane. The enzyme catalyses a 1,2-diacyl-sn-glycero-3-phospho-(1D-myo-inositol-3-phosphate) + H2O = a 1,2-diacyl-sn-glycero-3-phospho-(1D-myo-inositol) + phosphate. The catalysed reaction is a 1,2-diacyl-sn-glycero-3-phospho-(1D-myo-inositol 4-phosphate) + H2O = a 1,2-diacyl-sn-glycero-3-phospho-(1D-myo-inositol) + phosphate. Functionally, phosphoinositide phosphatase which catalyzes the hydrolysis of phosphatidylinositol 4-phosphate (PtdIns(4)P), phosphatidylinositol 3-phosphate (PtdIns(3)P) and has low activity towards phosphatidylinositol-3,5-bisphosphate (PtdIns(3,5)P2). The protein is Phosphatidylinositol-3-phosphatase SAC1-A (sacm1la) of Danio rerio (Zebrafish).